The sequence spans 92 residues: Small ribosomal subunit protein uS19 (92 aa).

The protein belongs to the universal ribosomal protein uS19 family.

Functionally, protein S19 forms a complex with S13 that binds strongly to the 16S ribosomal RNA. The protein is Small ribosomal subunit protein uS19 of Lactococcus lactis subsp. lactis (strain IL1403) (Streptococcus lactis).